The primary structure comprises 341 residues: Probable galacturonosyltransferase-like 2 (341 aa).

Residues 1–4 (MHSK) lie on the Cytoplasmic side of the membrane. A helical; Signal-anchor for type II membrane protein transmembrane segment spans residues 5–22 (FILYLSILAVFTVSFAGG). Topologically, residues 23–341 (ERFKEAPKFF…LESRFDLIES (319 aa)) are lumenal. N190 is a glycosylation site (N-linked (GlcNAc...) asparagine).

The protein belongs to the glycosyltransferase 8 family.

Its subcellular location is the golgi apparatus membrane. Its pathway is glycan metabolism; pectin biosynthesis. Functionally, may be involved in pectin and/or xylans biosynthesis in cell walls. The protein is Probable galacturonosyltransferase-like 2 (GATL2) of Arabidopsis thaliana (Mouse-ear cress).